A 113-amino-acid polypeptide reads, in one-letter code: MKLAELIELPKEQCNDKKCPHHGHLKVRGFFFKGKVIKKSDNKTVKIEIIRYYWLPKYERYELRRTRITAYLPECLKDIKEGDYVLIGETRPLSKTKHFVVLGKLKKGIALTQ.

It belongs to the universal ribosomal protein uS17 family. In terms of assembly, part of the 30S ribosomal subunit.

In terms of biological role, one of the primary rRNA binding proteins, it binds specifically to the 5'-end of 16S ribosomal RNA. This chain is Small ribosomal subunit protein uS17, found in Nanoarchaeum equitans (strain Kin4-M).